We begin with the raw amino-acid sequence, 478 residues long: Sulfate adenylyltransferase subunit 1 (478 aa).

The region spanning 28–244 is the tr-type G domain; that stretch reads KTMLRFLTCG…LESVDVVNAR (217 aa). Positions 37-44 are G1; the sequence is GSVDDGKS. Residue 37 to 44 participates in GTP binding; the sequence is GSVDDGKS. A G2 region spans residues 95-99; it reads GITID. Residues 116–119 form a G3 region; it reads DTPG. Residues 116–120 and 171–174 each bind GTP; these read DTPGH and NKMD. The segment at 171–174 is G4; the sequence is NKMD. Positions 209–211 are G5; that stretch reads SAL.

Belongs to the TRAFAC class translation factor GTPase superfamily. Classic translation factor GTPase family. CysN/NodQ subfamily. In terms of assembly, heterodimer composed of CysD, the smaller subunit, and CysN.

It catalyses the reaction sulfate + ATP + H(+) = adenosine 5'-phosphosulfate + diphosphate. Its pathway is sulfur metabolism; hydrogen sulfide biosynthesis; sulfite from sulfate: step 1/3. With CysD forms the ATP sulfurylase (ATPS) that catalyzes the adenylation of sulfate producing adenosine 5'-phosphosulfate (APS) and diphosphate, the first enzymatic step in sulfur assimilation pathway. APS synthesis involves the formation of a high-energy phosphoric-sulfuric acid anhydride bond driven by GTP hydrolysis by CysN coupled to ATP hydrolysis by CysD. The polypeptide is Sulfate adenylyltransferase subunit 1 (Yersinia pseudotuberculosis serotype O:1b (strain IP 31758)).